The primary structure comprises 338 residues: Lipoate-protein ligase A (338 aa).

Residues 29–216 (PATQRVLFLW…AFFAHYGERV (188 aa)) enclose the BPL/LPL catalytic domain. Residues Arg-71, 76–79 (GAVF), and Lys-134 contribute to the ATP site. Lys-134 contacts (R)-lipoate.

This sequence belongs to the LplA family. Monomer.

The protein localises to the cytoplasm. It carries out the reaction L-lysyl-[lipoyl-carrier protein] + (R)-lipoate + ATP = N(6)-[(R)-lipoyl]-L-lysyl-[lipoyl-carrier protein] + AMP + diphosphate + H(+). It participates in protein modification; protein lipoylation via exogenous pathway; protein N(6)-(lipoyl)lysine from lipoate: step 1/2. Its pathway is protein modification; protein lipoylation via exogenous pathway; protein N(6)-(lipoyl)lysine from lipoate: step 2/2. Its function is as follows. Catalyzes both the ATP-dependent activation of exogenously supplied lipoate to lipoyl-AMP and the transfer of the activated lipoyl onto the lipoyl domains of lipoate-dependent enzymes. The polypeptide is Lipoate-protein ligase A (Escherichia coli O81 (strain ED1a)).